A 280-amino-acid chain; its full sequence is Pre-mRNA-splicing factor PRP21 (280 aa).

The SURP motif 1 repeat unit spans residues 11–49; the sequence is DIKTTVNYIKQHGVEFENKLLEDERFSFIKKDDPLHEYY. A disordered region spans residues 53-72; it reads MNEPTDTVSGEDNDRKSERE. Residues 95–135 form an SURP motif 2 repeat; that stretch reads VIKLTARYYAKDKSIVEQMISKDGEARLNFMNSSHPLHKTF. 2 stretches are compositionally biased toward basic and acidic residues: residues 246-261 and 269-280; these read EKIV…GDSK and AVGETRLKKSKK. A disordered region spans residues 246–280; that stretch reads EKIVSDQGKQKGGDSKGKKRKIRAVGETRLKKSKK.

As to quaternary structure, belongs to the CWC complex (or CEF1-associated complex), a spliceosome sub-complex reminiscent of a late-stage spliceosome composed of the U2, U5 and U6 snRNAs and at least BUD13, BUD31, BRR2, CDC40, CEF1, CLF1, CUS1, CWC2, CWC15, CWC21, CWC22, CWC23, CWC24, CWC25, CWC27, ECM2, HSH155, IST3, ISY1, LEA1, MSL1, NTC20, PRP8, PRP9, PRP11, PRP19, PRP21, PRP22, PRP45, PRP46, SLU7, SMB1, SMD1, SMD2, SMD3, SMX2, SMX3, SNT309, SNU114, SPP2, SYF1, SYF2, RSE1 and YJU2.

The protein localises to the nucleus. Functionally, mRNA splicing factors, PRP9, PRP11, and PRP21, are necessary for binding of the U2 snRNP to the pre-mRNA in an early step of spliceosome assembly. The chain is Pre-mRNA-splicing factor PRP21 (PRP21) from Saccharomyces cerevisiae (strain ATCC 204508 / S288c) (Baker's yeast).